A 457-amino-acid chain; its full sequence is Transcription factor PCF7 (457 aa).

A coiled-coil region spans residues 58–84 (STLHYLLQEKERAQQAHEQLQIYQQQQ). The tract at residues 95–121 (RQPASRGPGGGGGGGDGGGSSGESTPV) is disordered. A compositionally biased stretch (gly residues) spans 101 to 115 (GPGGGGGGGDGGGSS). The TCP domain maps to 140–198 (RKDRHSKVCTARGLRDRRVRLAAHTAIRFYDVQDRLGYDRPSKAVDWLMRNAKAAIDEL). 2 disordered regions span residues 199 to 231 (PDRAEAPPPPAAASTEQPEGTEQANSTSYGFGN) and 263 to 299 (KSLFPSSSTASGAASAGHDEYRGSPPDLLSRTTSNQQ). The span at 212–230 (STEQPEGTEQANSTSYGFG) shows a compositional bias: polar residues. The span at 268-278 (SSSTASGAASA) shows a compositional bias: low complexity.

As to quaternary structure, forms homodimers and heterodimers.

Its subcellular location is the nucleus. Transcription activator. Binds the promoter core sequence 5'-GGNCC-3'. The sequence is that of Transcription factor PCF7 (PCF7) from Oryza sativa subsp. indica (Rice).